The chain runs to 364 residues: Fructose-bisphosphate aldolase C (364 aa).

Y5 is subject to Phosphotyrosine. Phosphoserine is present on residues S36, S39, and S45. R56 provides a ligand contact to substrate. Position 111 is an N6-acetyllysine (K111). S132 bears the Phosphoserine mark. K147 is a binding site for substrate. E188 serves as the catalytic Proton acceptor. K230 functions as the Schiff-base intermediate with dihydroxyacetone-P in the catalytic mechanism.

Belongs to the class I fructose-bisphosphate aldolase family. As to quaternary structure, homotetramer. Interacts with ATP6V1E1.

The enzyme catalyses beta-D-fructose 1,6-bisphosphate = D-glyceraldehyde 3-phosphate + dihydroxyacetone phosphate. The protein operates within carbohydrate degradation; glycolysis; D-glyceraldehyde 3-phosphate and glycerone phosphate from D-glucose: step 4/4. This chain is Fructose-bisphosphate aldolase C (ALDOC), found in Pan troglodytes (Chimpanzee).